The sequence spans 449 residues: Probable pectate lyase P59 (449 aa).

An N-terminal signal peptide occupies residues 1–22 (MGGPKIKYSFLFLCITFATIIP). N-linked (GlcNAc...) asparagine glycans are attached at residues asparagine 56, asparagine 80, and asparagine 81. The Ca(2+) site is built by aspartate 245, aspartate 269, and aspartate 273. Arginine 325 is a catalytic residue.

This sequence belongs to the polysaccharide lyase 1 family. The cofactor is Ca(2+). Expressed in anthers and pollen.

The catalysed reaction is Eliminative cleavage of (1-&gt;4)-alpha-D-galacturonan to give oligosaccharides with 4-deoxy-alpha-D-galact-4-enuronosyl groups at their non-reducing ends.. It functions in the pathway glycan metabolism; pectin degradation; 2-dehydro-3-deoxy-D-gluconate from pectin: step 2/5. In terms of biological role, might be needed during pollen development and tube growth. The protein is Probable pectate lyase P59 (LAT59) of Solanum lycopersicum (Tomato).